Reading from the N-terminus, the 119-residue chain is Large ribosomal subunit protein uL22 (119 aa).

It belongs to the universal ribosomal protein uL22 family. Part of the 50S ribosomal subunit.

This protein binds specifically to 23S rRNA; its binding is stimulated by other ribosomal proteins, e.g. L4, L17, and L20. It is important during the early stages of 50S assembly. It makes multiple contacts with different domains of the 23S rRNA in the assembled 50S subunit and ribosome. Its function is as follows. The globular domain of the protein is located near the polypeptide exit tunnel on the outside of the subunit, while an extended beta-hairpin is found that lines the wall of the exit tunnel in the center of the 70S ribosome. The polypeptide is Large ribosomal subunit protein uL22 (Rickettsia conorii (strain ATCC VR-613 / Malish 7)).